We begin with the raw amino-acid sequence, 785 residues long: Semaphorin-3F (785 aa).

Residues 1 to 18 (MLVAGLLLWASLLTGAWP) form the signal peptide. In terms of domain architecture, Sema spans 31-545 (RVRLSFKELK…SAVGVTHLSL (515 aa)). Residue Asn53 is glycosylated (N-linked (GlcNAc...) asparagine). Cys104 and Cys115 are oxidised to a cystine. The N-linked (GlcNAc...) asparagine glycan is linked to Asn126. 5 disulfides stabilise this stretch: Cys133–Cys142, Cys300–Cys412, Cys324–Cys372, Cys548–Cys566, and Cys678–Cys746. Residues 605–690 (ANKNAVESVQ…TENNFKHVVT (86 aa)) enclose the Ig-like C2-type domain. The disordered stretch occupies residues 752–785 (HVPPSPREAPGAPRSPEPQDQKKPRNRRHHPPDT). Residues 775–785 (PRNRRHHPPDT) show a composition bias toward basic residues.

It belongs to the semaphorin family. In terms of tissue distribution, expressed abundantly but differentially in a variety of neural and nonneural tissues. There is high expression in mammary gland, kidney, fetal brain, and lung and lower expression in heart and liver.

It is found in the secreted. In terms of biological role, may play a role in cell motility and cell adhesion. The sequence is that of Semaphorin-3F (SEMA3F) from Homo sapiens (Human).